A 270-amino-acid polypeptide reads, in one-letter code: MTPPSRTVLIVSDHTGLTAETTARALLAHFPSQSLKYLQRPFVASVEVARGVAREVAALAERGERPLIFTTITEPAVMRELEAAPARVFDLLGPGLIALEHEFGEKAARSVGRYHDMHDQTSYLARMDALDFALATDDGLGDRQYGLADVILVGVSRAGKTPTSLFLALQHSVRASNYPLAEDDFERESLPIPLEPHRAKLHGLTIDPRRLHAIRTQRKPGSRYASLEQCEYEVRQAERLFGRAGIPVRDTTSASVEEIAAGILAQLRRG.

Residue 154–161 (GVSRAGKT) coordinates ADP.

It belongs to the pyruvate, phosphate/water dikinase regulatory protein family. PSRP subfamily.

It catalyses the reaction [pyruvate, water dikinase] + ADP = [pyruvate, water dikinase]-phosphate + AMP + H(+). The enzyme catalyses [pyruvate, water dikinase]-phosphate + phosphate + H(+) = [pyruvate, water dikinase] + diphosphate. In terms of biological role, bifunctional serine/threonine kinase and phosphorylase involved in the regulation of the phosphoenolpyruvate synthase (PEPS) by catalyzing its phosphorylation/dephosphorylation. The chain is Putative phosphoenolpyruvate synthase regulatory protein from Deinococcus geothermalis (strain DSM 11300 / CIP 105573 / AG-3a).